Reading from the N-terminus, the 136-residue chain is Cyclase aurE (136 aa).

It belongs to the aurE cyclase family.

Its pathway is polyketide biosynthesis. Functionally, cyclase; part of the gene cluster that mediates the biosynthesis of aurovertins, fungal polyketides that exhibit potent inhibition of adenosine triphosphate synthase. Tha biosynthesis starts with the HR-PKS aurA that selects propionate as the starter unit; synthesizes a hexa-ene chain through the repeated functions of the KR and DH domains in the first six iterations; selectively introduces three alpha-methyl substitutions at C4, C6, and C16 using the S-adensylmethionine-dependent cMET; and shuts off KR and DH in the last three iterations to afford a 1,3,5-triketo portion that can undergo intramolecular cyclization to yield the alpha-pyrone intermediate. AurE may act as a cyclase and enhances the rate of pyrone formation and product release of aurA. The methyltransferase aurB then methylates the C17 hydroxyl group. C17 methylation is required to initiate epoxidation by the downstream monooxygenase aurC. The monooxygenase aurC and the epoxide hydrolase aurD can iteratively transform the terminal triene portion of the methylated precursor into the dioxabicyclo[3.2.1]octane scaffold of aurovertin E. Epoxidation modifications of the precursor occur in two separate steps; bis-epoxidation of the two terminal olefins takes place first, followed by another epoxidation that occurs at C7-C8 after tetrahydrofuran formation. The O-acyltransferase aurG converts aurovertin E to aurovertin A. In Calcarisporium arbuscula (Dendryphion arbuscula), this protein is Cyclase aurE.